The primary structure comprises 119 residues: Large ribosomal subunit protein uL18 (119 aa).

Belongs to the universal ribosomal protein uL18 family. As to quaternary structure, part of the 50S ribosomal subunit; part of the 5S rRNA/L5/L18/L25 subcomplex. Contacts the 5S and 23S rRNAs.

Its function is as follows. This is one of the proteins that bind and probably mediate the attachment of the 5S RNA into the large ribosomal subunit, where it forms part of the central protuberance. In Borrelia hermsii (strain HS1 / DAH), this protein is Large ribosomal subunit protein uL18.